Here is a 576-residue protein sequence, read N- to C-terminus: MRASKYHLNTLKEAPAEAEIASHQLMTRAGMIRKLAGGIYTYMPLGLKVIRKIEGIVREEMNAAGAIELLMPVVQPAELWMESGRWEQYGAELLRIKDRHQRDFVLQPTSEEVITDIARNEIQSYRQLPLNFYHIQTKFRDERRPRFGLMRGREFTMKDAYSFDRDEAGAQRSYDIMYAAYQRIFQRLGLEFRAVAADTGSIGGSRSHEFQVIADTGEDLIVYNPESDYAANIELAEAPALLATRAAPGQDLEAVPTPGAAKCEDVAKLLDLPLARTIKSIVLAVDQPEGPAQVWLLLLRGDHELNEIKAGKLPGLAGFRFATETEILDHFGCKPGYLGPIKTARPVHVVADRTVANMADFVCGANREDYHYQGANWGRDLPEPELVADLRNVVEGDPSPDGKGALSIQRGIEVGHVFFLGTKYSEALKATFLDDNGKPAVLQMGCYGIGVTRIVGAAIEQNHDARGIIWPRAIAPYEVVICPVGWGKSETVRDTALALYEALRARGVDVMLDDRDSRPGVMFAEWELIGVPLRVTVGERGLNEGVVELQARREAEAAKVPVDQALAQTLAKLDLL.

This sequence belongs to the class-II aminoacyl-tRNA synthetase family. ProS type 1 subfamily. Homodimer.

The protein localises to the cytoplasm. It carries out the reaction tRNA(Pro) + L-proline + ATP = L-prolyl-tRNA(Pro) + AMP + diphosphate. Catalyzes the attachment of proline to tRNA(Pro) in a two-step reaction: proline is first activated by ATP to form Pro-AMP and then transferred to the acceptor end of tRNA(Pro). As ProRS can inadvertently accommodate and process non-cognate amino acids such as alanine and cysteine, to avoid such errors it has two additional distinct editing activities against alanine. One activity is designated as 'pretransfer' editing and involves the tRNA(Pro)-independent hydrolysis of activated Ala-AMP. The other activity is designated 'posttransfer' editing and involves deacylation of mischarged Ala-tRNA(Pro). The misacylated Cys-tRNA(Pro) is not edited by ProRS. This is Proline--tRNA ligase from Bordetella pertussis (strain Tohama I / ATCC BAA-589 / NCTC 13251).